A 238-amino-acid chain; its full sequence is Ribosomal RNA small subunit methyltransferase G (238 aa).

Residues Gly78, Phe83, 129-130, and Arg148 contribute to the S-adenosyl-L-methionine site; that span reads AE. Residues 217-238 are disordered; that stretch reads KKKETPKKYPRKAGTPAKSPIK.

Belongs to the methyltransferase superfamily. RNA methyltransferase RsmG family.

Its subcellular location is the cytoplasm. In terms of biological role, specifically methylates the N7 position of a guanine in 16S rRNA. In Lactococcus lactis subsp. cremoris (strain SK11), this protein is Ribosomal RNA small subunit methyltransferase G.